A 288-amino-acid chain; its full sequence is Putative sugar uptake protein gbs2116 (288 aa).

The next 10 helical transmembrane spans lie at 4–26 (LLIALIPMFAWGSIGFVSNKIGG), 33–50 (FGMTLGALLFAIIVWLFK), 55–72 (TASLWIFGILGGILWSVG), 85–107 (VSVANPLSSGAQLVGGSLVGALV), 117–134 (FILGLTALTLLVIGFYFS), 154–171 (FATIAYSTVGYISYAVLF), 181–200 (AVILPMAVGMCLGAICFMKF), 207–229 (VVVKNMITGLMWGVGNVFMLLAA), 234–256 (LAIAFSFSQLGVIISIIGGILFL), and 268–285 (VVMGILCFVMGAILLGIV).

Belongs to the GRP transporter (TC 2.A.7.5) family.

It is found in the cell membrane. The protein is Putative sugar uptake protein gbs2116 of Streptococcus agalactiae serotype III (strain NEM316).